Here is a 238-residue protein sequence, read N- to C-terminus: 3-dehydroquinate dehydratase (238 aa).

3-dehydroquinate is bound by residues 35 to 37 (ELR) and R70. Residue H133 is the Proton donor/acceptor of the active site. K160 acts as the Schiff-base intermediate with substrate in catalysis. The 3-dehydroquinate site is built by R202 and Q225.

It belongs to the type-I 3-dehydroquinase family. In terms of assembly, homodimer.

The catalysed reaction is 3-dehydroquinate = 3-dehydroshikimate + H2O. The protein operates within metabolic intermediate biosynthesis; chorismate biosynthesis; chorismate from D-erythrose 4-phosphate and phosphoenolpyruvate: step 3/7. In terms of biological role, involved in the third step of the chorismate pathway, which leads to the biosynthesis of aromatic amino acids. Catalyzes the cis-dehydration of 3-dehydroquinate (DHQ) and introduces the first double bond of the aromatic ring to yield 3-dehydroshikimate. This Staphylococcus aureus (strain bovine RF122 / ET3-1) protein is 3-dehydroquinate dehydratase.